Consider the following 893-residue polypeptide: TBC domain-containing protein kinase-like protein (893 aa).

A Protein kinase domain is found at 1–273 (MFPLKDAEMG…PDQLMKDKVF (273 aa)). The region spanning 466 to 651 (DIPPLMRGLT…HLWDTLLLGN (186 aa)) is the Rab-GAP TBC domain. The disordered stretch occupies residues 710-749 (YRQHAQPPKPSSDSSGGRSSAPYFSAECPDPPKTDLSRES). Over residues 720–729 (SSDSSGGRSS) the composition is skewed to low complexity. The Rhodanese domain maps to 790–889 (SKPKLLVVDI…IKPTGLLTIP (100 aa)).

The protein belongs to the protein kinase superfamily. In terms of assembly, component of the FERRY complex composed of five subunits, TBCK, PPP1R21, FERRY3, CRYZL1 and GATD1 with a ratio of 1:2:1:2:4, respectively.

It localises to the cytoplasm. It is found in the cytoskeleton. Its subcellular location is the spindle. The protein localises to the midbody. The protein resides in the early endosome. Functionally, component of the FERRY complex (Five-subunit Endosomal Rab5 and RNA/ribosome intermediary). The FERRY complex directly interacts with mRNAs and RAB5A, and functions as a RAB5A effector involved in the localization and the distribution of specific mRNAs most likely by mediating their endosomal transport. The complex recruits mRNAs and ribosomes to early endosomes through direct mRNA-interaction. Also involved in the modulation of mTOR signaling and expression of mTOR complex components. Involved in the control of actin-cytoskeleton organization. The protein is TBC domain-containing protein kinase-like protein of Homo sapiens (Human).